We begin with the raw amino-acid sequence, 1070 residues long: Probable arabinosyltransferase C (1070 aa).

The next 12 helical transmembrane spans lie at 10-32 (IARL…TPFL), 210-232 (LLKT…ALHL), 247-269 (SRWW…WHFV), 399-421 (VATS…LFSG), 425-442 (IASI…LTIL), 449-471 (FGAV…LIFR), 512-534 (SVAR…AMSL), 547-564 (SRRI…MMFT), 574-596 (VFAG…AALR), 603-625 (VFAA…WWYV), 645-664 (TALL…FHFV), and 685-707 (SPIA…MAMI).

It belongs to the emb family.

The protein localises to the cell membrane. In terms of biological role, arabinosyl transferase responsible for the polymerization of arabinose into the arabinan of arabinogalactan. The polypeptide is Probable arabinosyltransferase C (embC) (Mycobacterium leprae (strain TN)).